We begin with the raw amino-acid sequence, 131 residues long: uncharacterized protein (131 aa).

An N-terminal signal peptide occupies residues 1–26 (MKKIVAAIVVIGLVFIAFFYLYSRSG).

This is an uncharacterized protein from Bacillus subtilis (strain 168).